The primary structure comprises 275 residues: Thiazole synthase (275 aa).

Lysine 108 functions as the Schiff-base intermediate with DXP in the catalytic mechanism. 1-deoxy-D-xylulose 5-phosphate-binding positions include glycine 169, 196–197, and 218–219; these read AG and NT.

The protein belongs to the ThiG family. As to quaternary structure, homotetramer. Forms heterodimers with either ThiH or ThiS.

The protein localises to the cytoplasm. The enzyme catalyses [ThiS sulfur-carrier protein]-C-terminal-Gly-aminoethanethioate + 2-iminoacetate + 1-deoxy-D-xylulose 5-phosphate = [ThiS sulfur-carrier protein]-C-terminal Gly-Gly + 2-[(2R,5Z)-2-carboxy-4-methylthiazol-5(2H)-ylidene]ethyl phosphate + 2 H2O + H(+). It participates in cofactor biosynthesis; thiamine diphosphate biosynthesis. Its function is as follows. Catalyzes the rearrangement of 1-deoxy-D-xylulose 5-phosphate (DXP) to produce the thiazole phosphate moiety of thiamine. Sulfur is provided by the thiocarboxylate moiety of the carrier protein ThiS. In vitro, sulfur can be provided by H(2)S. This chain is Thiazole synthase, found in Ralstonia nicotianae (strain ATCC BAA-1114 / GMI1000) (Ralstonia solanacearum).